Consider the following 359-residue polypeptide: Aspartate carbamoyltransferase catalytic subunit (359 aa).

Carbamoyl phosphate-binding residues include arginine 52 and threonine 53. Lysine 81 is a binding site for L-aspartate. Positions 102, 130, and 133 each coordinate carbamoyl phosphate. 2 residues coordinate L-aspartate: arginine 163 and arginine 224. The carbamoyl phosphate site is built by leucine 264 and proline 265.

Belongs to the aspartate/ornithine carbamoyltransferase superfamily. ATCase family. As to quaternary structure, heterododecamer (2C3:3R2) of six catalytic PyrB chains organized as two trimers (C3), and six regulatory PyrI chains organized as three dimers (R2).

The catalysed reaction is carbamoyl phosphate + L-aspartate = N-carbamoyl-L-aspartate + phosphate + H(+). It functions in the pathway pyrimidine metabolism; UMP biosynthesis via de novo pathway; (S)-dihydroorotate from bicarbonate: step 2/3. Catalyzes the condensation of carbamoyl phosphate and aspartate to form carbamoyl aspartate and inorganic phosphate, the committed step in the de novo pyrimidine nucleotide biosynthesis pathway. This Brachyspira hyodysenteriae (strain ATCC 49526 / WA1) protein is Aspartate carbamoyltransferase catalytic subunit.